The chain runs to 508 residues: Putative POTE ankyrin domain family member M (508 aa).

5 ANK repeats span residues Q172 to I201, K205 to I234, Y238 to S267, H271 to A300, and Y304 to S333. The segment at S369–G487 is disordered. Basic and acidic residues-rich tracts occupy residues Q377 to G392 and E406 to K421. Residues T476 to G487 show a composition bias toward polar residues.

This sequence belongs to the POTE family.

The sequence is that of Putative POTE ankyrin domain family member M (POTEM) from Homo sapiens (Human).